The sequence spans 253 residues: Flap endonuclease Xni (253 aa).

A Mg(2+)-binding site is contributed by Asp105. In terms of domain architecture, 5'-3' exonuclease spans 162 to 251 (ERHQLLDYIA…HLKLSDLRVN (90 aa)). Residues Leu172, Pro181, Ile183, and Ile186 each contribute to the K(+) site. The tract at residues 185–190 (GIGPKS) is interaction with DNA.

This sequence belongs to the Xni family. The cofactor is Mg(2+). It depends on K(+) as a cofactor.

Its function is as follows. Has flap endonuclease activity. During DNA replication, flap endonucleases cleave the 5'-overhanging flap structure that is generated by displacement synthesis when DNA polymerase encounters the 5'-end of a downstream Okazaki fragment. The chain is Flap endonuclease Xni from Shewanella amazonensis (strain ATCC BAA-1098 / SB2B).